The chain runs to 409 residues: Methylthioribose-1-phosphate isomerase (409 aa).

Residue Asp-277 is the Proton donor of the active site.

The protein belongs to the eIF-2B alpha/beta/delta subunits family. MtnA subfamily.

The protein localises to the cytoplasm. The protein resides in the nucleus. The enzyme catalyses 5-(methylsulfanyl)-alpha-D-ribose 1-phosphate = 5-(methylsulfanyl)-D-ribulose 1-phosphate. It functions in the pathway amino-acid biosynthesis; L-methionine biosynthesis via salvage pathway; L-methionine from S-methyl-5-thio-alpha-D-ribose 1-phosphate: step 1/6. Catalyzes the interconversion of methylthioribose-1-phosphate (MTR-1-P) into methylthioribulose-1-phosphate (MTRu-1-P). This Scheffersomyces stipitis (strain ATCC 58785 / CBS 6054 / NBRC 10063 / NRRL Y-11545) (Yeast) protein is Methylthioribose-1-phosphate isomerase.